The chain runs to 143 residues: Type II secretion system core protein G (143 aa).

A propeptide spans 1–17 (leader sequence); that stretch reads MIKRSITRSPSRAGQAG. The residue at position 18 (M18) is an N-methylmethionine. A helical transmembrane segment spans residues 18-38; sequence MSLLEIIIVIVLIGAVLTLVG.

Belongs to the GSP G family. In terms of assembly, type II secretion system is composed of four main components: the outer membrane complex, the inner membrane complex, the cytoplasmic secretion ATPase and the periplasm-spanning pseudopilus. Forms homomultimers. Interacts with pseudopilin tip complex component XpsJ as well as XpsI and XcpH. Interacts with XpsN and secretin XpsD. In terms of processing, cleaved by the prepilin peptidase. Methylated by prepilin peptidase at the amino group of the N-terminal methionine once the leader sequence is cleaved.

The protein resides in the cell inner membrane. Core component of the type II secretion system required for the energy-dependent secretion of extracellular factors such as proteases and toxins from the periplasm. Pseudopilin (pilin-like) protein that polymerizes to form the pseudopilus. Further polymerization triggers pseudopilus growth. The sequence is that of Type II secretion system core protein G (xpsG) from Xanthomonas campestris pv. campestris (strain ATCC 33913 / DSM 3586 / NCPPB 528 / LMG 568 / P 25).